The primary structure comprises 229 residues: Probable coenzyme A transferase subunit alpha (229 aa).

CoA is bound at residue 26 to 32; sequence GGFGGVG.

Belongs to the 3-oxoacid CoA-transferase subunit A family. As to quaternary structure, heterodimer of a subunit alpha and a subunit beta.

The polypeptide is Probable coenzyme A transferase subunit alpha (yodS) (Bacillus subtilis (strain 168)).